The primary structure comprises 378 residues: Putative dioxygenase VC_1345 (378 aa).

Fe cation-binding residues include His288, Asp294, and His324.

It belongs to the homogentisate dioxygenase family. It depends on Fe cation as a cofactor.

This chain is Putative dioxygenase VC_1345, found in Vibrio cholerae serotype O1 (strain ATCC 39315 / El Tor Inaba N16961).